The chain runs to 717 residues: Polyribonucleotide nucleotidyltransferase (717 aa).

2 residues coordinate Mg(2+): D487 and D493. Residues 554–613 (PKIITMAINPDKIRDVIGPSGKQINKIIEETGVKIDIEQDGTVFISSINQEMNEKAKKII) form the KH domain. Positions 623 to 691 (GEIYLGKVKR…KQGRVNLSRK (69 aa)) constitute an S1 motif domain.

This sequence belongs to the polyribonucleotide nucleotidyltransferase family. Mg(2+) serves as cofactor.

It localises to the cytoplasm. The catalysed reaction is RNA(n+1) + phosphate = RNA(n) + a ribonucleoside 5'-diphosphate. Involved in mRNA degradation. Catalyzes the phosphorolysis of single-stranded polyribonucleotides processively in the 3'- to 5'-direction. This is Polyribonucleotide nucleotidyltransferase from Bacillus mycoides (strain KBAB4) (Bacillus weihenstephanensis).